The chain runs to 125 residues: Protein ApaG (125 aa).

One can recognise an ApaG domain in the interval 1 to 125 (MIDAPRIIVQ…FRLAIPSLIN (125 aa)).

This is Protein ApaG from Edwardsiella ictaluri (strain 93-146).